Here is a 303-residue protein sequence, read N- to C-terminus: UDP-3-O-acyl-N-acetylglucosamine deacetylase (303 aa).

Residues histidine 78, histidine 237, and aspartate 241 each contribute to the Zn(2+) site. The active-site Proton donor is the histidine 264.

This sequence belongs to the LpxC family. Zn(2+) is required as a cofactor.

The catalysed reaction is a UDP-3-O-[(3R)-3-hydroxyacyl]-N-acetyl-alpha-D-glucosamine + H2O = a UDP-3-O-[(3R)-3-hydroxyacyl]-alpha-D-glucosamine + acetate. It functions in the pathway glycolipid biosynthesis; lipid IV(A) biosynthesis; lipid IV(A) from (3R)-3-hydroxytetradecanoyl-[acyl-carrier-protein] and UDP-N-acetyl-alpha-D-glucosamine: step 2/6. In terms of biological role, catalyzes the hydrolysis of UDP-3-O-myristoyl-N-acetylglucosamine to form UDP-3-O-myristoylglucosamine and acetate, the committed step in lipid A biosynthesis. This Saccharophagus degradans (strain 2-40 / ATCC 43961 / DSM 17024) protein is UDP-3-O-acyl-N-acetylglucosamine deacetylase.